Consider the following 290-residue polypeptide: Protease HtpX (290 aa).

2 helical membrane passes run 6 to 26 (LFLVTNLAVMLVLGVVLNILF) and 36 to 56 (ISGLLMFCAVFGFGGSFISLL). His143 serves as a coordination point for Zn(2+). Glu144 is an active-site residue. His147 serves as a coordination point for Zn(2+). Helical transmembrane passes span 158 to 178 (LIQGVVNTFVMFFARIVAGVI) and 200 to 220 (ITVFVLEMAFGVLASMIVMWF). Glu225 is a Zn(2+) binding site.

Belongs to the peptidase M48B family. Zn(2+) is required as a cofactor.

The protein localises to the cell inner membrane. The protein is Protease HtpX of Aeromonas salmonicida (strain A449).